The primary structure comprises 561 residues: Membrane protein insertase YidC (561 aa).

6 consecutive transmembrane segments (helical) span residues Ile-7 to Tyr-27, Leu-342 to Leu-362, Leu-368 to Phe-388, Leu-438 to Leu-458, Trp-469 to Met-489, and Pro-516 to Val-536.

The protein belongs to the OXA1/ALB3/YidC family. Type 1 subfamily. As to quaternary structure, interacts with the Sec translocase complex via SecD. Specifically interacts with transmembrane segments of nascent integral membrane proteins during membrane integration.

It localises to the cell inner membrane. Functionally, required for the insertion and/or proper folding and/or complex formation of integral membrane proteins into the membrane. Involved in integration of membrane proteins that insert both dependently and independently of the Sec translocase complex, as well as at least some lipoproteins. Aids folding of multispanning membrane proteins. This is Membrane protein insertase YidC from Pseudomonas entomophila (strain L48).